We begin with the raw amino-acid sequence, 285 residues long: Orotidine 5'-phosphate decarboxylase (285 aa).

Residues D40, 62-64, 93-102, Y235, and R253 each bind substrate; these read KTH and DRKFVDIGST. The active-site Proton donor is the K95.

Belongs to the OMP decarboxylase family.

It carries out the reaction orotidine 5'-phosphate + H(+) = UMP + CO2. Its pathway is pyrimidine metabolism; UMP biosynthesis via de novo pathway; UMP from orotate: step 2/2. This is Orotidine 5'-phosphate decarboxylase (URA3) from Paracoccidioides brasiliensis.